The sequence spans 485 residues: Glutamyl-tRNA(Gln) amidotransferase subunit A (485 aa).

Active-site charge relay system residues include Lys-78 and Ser-153. The active-site Acyl-ester intermediate is Ser-177.

The protein belongs to the amidase family. GatA subfamily. In terms of assembly, heterotrimer of A, B and C subunits.

It catalyses the reaction L-glutamyl-tRNA(Gln) + L-glutamine + ATP + H2O = L-glutaminyl-tRNA(Gln) + L-glutamate + ADP + phosphate + H(+). In terms of biological role, allows the formation of correctly charged Gln-tRNA(Gln) through the transamidation of misacylated Glu-tRNA(Gln) in organisms which lack glutaminyl-tRNA synthetase. The reaction takes place in the presence of glutamine and ATP through an activated gamma-phospho-Glu-tRNA(Gln). The protein is Glutamyl-tRNA(Gln) amidotransferase subunit A of Desulfatibacillum aliphaticivorans.